We begin with the raw amino-acid sequence, 176 residues long: Ribosome maturation factor RimM (176 aa).

The 74-residue stretch at 103–176 folds into the PRC barrel domain; it reads QNDEYYFYEI…KIVVKELEWI (74 aa).

It belongs to the RimM family. Binds ribosomal protein uS19.

It is found in the cytoplasm. An accessory protein needed during the final step in the assembly of 30S ribosomal subunit, possibly for assembly of the head region. Essential for efficient processing of 16S rRNA. May be needed both before and after RbfA during the maturation of 16S rRNA. It has affinity for free ribosomal 30S subunits but not for 70S ribosomes. The protein is Ribosome maturation factor RimM of Thermotoga neapolitana (strain ATCC 49049 / DSM 4359 / NBRC 107923 / NS-E).